Consider the following 35-residue polypeptide: GFGALFKFLAKKVAKTVAKQAAKQGAKYVVNKQME.

Glutamic acid 1-amide is present on glutamate 35.

Belongs to the cationic peptide 04 (cupiennin) family. 01 subfamily. As to quaternary structure, monomer. Interacts with CSTX-1 (AC P81694), CSTX-9 (AC P58604), and CSTX-13 (AC P83919). In terms of tissue distribution, expressed by the venom gland.

The protein resides in the secreted. Functionally, has antimicrobial activity against B.subtilis, E.coli, E.faecalis, P.denitrificans, P.aeruginosa, P.putida, S.aureus, and S.epidermidis. Shows insecticidal and hemolytic activities. Probably acts by disturbing membrane function with its amphipathic structure. Synergistically increases the insecticidal activity of CSTX-1 (AC P81694), CSTX-9 (AC P58604), and CSTX-13 (AC P83919) by up to 65%. Also inhibits the formation of nitric oxide by neuronal nitric oxide synthase. This Cupiennius salei (American wandering spider) protein is Cupiennin-1a.